The chain runs to 240 residues: Thiopurine S-methyltransferase (240 aa).

S-adenosyl-L-methionine is bound at residue 24-35 (WQDKWVTRHIAF). Phe35 contacts substrate. Position 53 is an N6-acetyllysine (Lys53). S-adenosyl-L-methionine contacts are provided by residues Leu64, Glu85, 129 to 130 (SI), and Arg147.

It belongs to the class I-like SAM-binding methyltransferase superfamily. TPMT family. In terms of assembly, monomer.

It is found in the cytoplasm. It catalyses the reaction S-adenosyl-L-methionine + a thiopurine = S-adenosyl-L-homocysteine + a thiopurine S-methylether.. The enzyme catalyses mercaptopurine + S-adenosyl-L-methionine = 6-methylthiopurine + S-adenosyl-L-homocysteine + H(+). Functionally, catalyzes the S-methylation of thiopurine drugs such as 6-mercaptopurine (also called mercaptopurine, 6-MP or its brand name Purinethol) using S-adenosyl-L-methionine as the methyl donor. TPMT activity modulates the cytotoxic effects of thiopurine prodrugs. A natural substrate for this enzyme has yet to be identified. In Rattus norvegicus (Rat), this protein is Thiopurine S-methyltransferase (Tpmt).